We begin with the raw amino-acid sequence, 474 residues long: Myocyte-specific enhancer factor 2C (474 aa).

Residues 3–57 (RKKIQITRIMDERNRQVTFTKRKFGLMKKAYELSVLCDCEIALIIFNSTNKLFQY) enclose the MADS-box domain. K4 carries the N6-acetyllysine modification. The mef2-type DNA-binding region spans 58–86 (ASTDMDKVLLKYTEYNEPHESRTNSDIVE). The residue at position 59 (S59) is a Phosphoserine; by CK2. The segment at 91-118 (KGLNGCDSPDPDADDSVGHSPESEDKYR) is disordered. Phosphoserine occurs at positions 98 and 106. G108 carries the post-translational modification Phosphothreonine. S110 carries the post-translational modification Phosphoserine. K116 and K119 each carry N6-acetyllysine. Phosphoserine occurs at positions 222 and 228. K234 and K239 each carry N6-acetyllysine. S240 is subject to Phosphoserine. N6-acetyllysine is present on residues K252 and K264. The tract at residues 271–278 (SEDVDLLL) is beta domain. 2 positions are modified to phosphothreonine; by MAPK14: T293 and T300. The transcription repressor stretch occupies residues 368 to 399 (ACTSTHLSQSSNLSLPSTQSLSIKSEPVSPPR). The span at 375-390 (SQSSNLSLPSTQSLSI) shows a compositional bias: polar residues. The tract at residues 375–474 (SQSSNLSLPS…RMRLSEGWAT (100 aa)) is disordered. A Glycyl lysine isopeptide (Lys-Gly) (interchain with G-Cter in SUMO) cross-link involves residue K391. A Phosphoserine; by CDK5 modification is found at S396. S420 carries the phosphoserine; by MAPK7 modification. A compositionally biased stretch (low complexity) spans 420–433 (SPVDSLSSCSSSYD). Residues 434-444 (GSDREDHRNEF) show a composition bias toward basic and acidic residues. S446 bears the Phosphoserine mark.

This sequence belongs to the MEF2 family. Forms a complex with class II HDACs in undifferentiating cells. On myogenic differentiation, HDACs are released into the cytoplasm allowing MEF2s to interact with other proteins for activation. Interacts with EP300 in differentiating cells; the interaction acetylates MEF2C leading to increased DNA binding and activation. Interacts with HDAC7 and CARM1. Interacts with HDAC4, HDAC7 AND HDAC9; the interaction with HDACs represses transcriptional activity. Interacts with LPIN1. Interacts with MYOCD. Interacts with AKAP13. Interacts with FOXK1; the interaction inhibits MEF2C transactivation activity. Interacts (via N-terminus) with HABP4; this interaction decreases DNA-binding activity of MEF2C in myocardial cells in response to mechanical stress. Interacts with JPH2; interaction specifically takes place with the Junctophilin-2 N-terminal fragment cleavage product of JPH2. Interacts (via MADS box) with SOX18. Interacts with PHF7; the interaction promotes MEF2C binding to its transcription targets. Phosphorylation on Ser-59 enhances DNA binding activity. Phosphorylation on Ser-396 is required for Lys-391 sumoylation and inhibits transcriptional activity. In terms of processing, acetylated by p300 on several sites in diffentiating myocytes. Acetylation on Lys-4 increases DNA binding and transactivation. Post-translationally, sumoylated on Lys-391 with SUMO2 but not by SUMO1 represses transcriptional activity. Proteolytically cleaved in cerebellar granule neurons, probably by caspase 7, following neurotoxicity. Preferentially cleaves the CDK5-mediated hyperphosphorylated form which leads to neuron apoptosis and transcriptional inactivation. Widely expressed though mainly restricted to skeletal and cardiac muscle, brain, neurons and lymphocytes. Beta domain-lacking isoforms are the most predominantly expressed in all tissues including skeletal and cardiac muscle and brain. Only brain expresses all isoforms. Expression occurs primarily in the internal granule cell layer of the olfactory bulb, cortex, thalamus, hippocampus and cerebellum. Low levels in the cerebellum and hindbrain. Expressed throughout the cortex, including the frontal and entorhinal cortex, dentate gyrus, and basolateral amygdala. Selectively expressed in B-cells but not in T-cells, and its expression increases as B-cells mature.

Its subcellular location is the nucleus. The protein localises to the cytoplasm. It is found in the sarcoplasm. Transcription activator which binds specifically to the MEF2 element present in the regulatory regions of many muscle-specific genes. Controls cardiac morphogenesis and myogenesis, and is also involved in vascular development. Enhances transcriptional activation mediated by SOX18. May also be involved in neurogenesis and in the development of cortical architecture. Isoforms that lack the repressor domain are more active than isoform 1. Plays an essential role in hippocampal-dependent learning and memory by suppressing the number of excitatory synapses and thus regulating basal and evoked synaptic transmission. Crucial for normal neuronal development, distribution, and electrical activity in the neocortex. Necessary for proper development of megakaryocytes and platelets and for bone marrow B-lymphopoiesis. Required for B-cell survival and proliferation in response to BCR stimulation, efficient IgG1 antibody responses to T-cell-dependent antigens and for normal induction of germinal center B-cells. This Mus musculus (Mouse) protein is Myocyte-specific enhancer factor 2C.